The chain runs to 479 residues: Glycerol kinase 5 (479 aa).

ATP contacts are provided by Ser-20 and Ser-21. The glycerol site is built by Arg-90, Asp-267, and Gln-268. ATP is bound by residues Thr-289, Gly-332, and Gly-432.

This sequence belongs to the FGGY kinase family.

The protein localises to the cytoplasm. It carries out the reaction glycerol + ATP = sn-glycerol 3-phosphate + ADP + H(+). Its pathway is polyol metabolism; glycerol degradation via glycerol kinase pathway; sn-glycerol 3-phosphate from glycerol: step 1/1. Functionally, skin-specific kinase that plays a key role in glycerol metabolism, catalyzing its phosphorylation to produce sn-glycerol 3-phosphate. Involved in skin-specific regulation of sterol regulatory element-binding protein (SREBP) processing and lipid biosynthesis. The chain is Glycerol kinase 5 (gk5) from Xenopus laevis (African clawed frog).